The following is a 275-amino-acid chain: 2,3,4,5-tetrahydropyridine-2,6-dicarboxylate N-succinyltransferase (275 aa).

Residues R105 and D142 each coordinate substrate.

This sequence belongs to the transferase hexapeptide repeat family. Homotrimer.

The protein resides in the cytoplasm. The catalysed reaction is (S)-2,3,4,5-tetrahydrodipicolinate + succinyl-CoA + H2O = (S)-2-succinylamino-6-oxoheptanedioate + CoA. It functions in the pathway amino-acid biosynthesis; L-lysine biosynthesis via DAP pathway; LL-2,6-diaminopimelate from (S)-tetrahydrodipicolinate (succinylase route): step 1/3. The protein is 2,3,4,5-tetrahydropyridine-2,6-dicarboxylate N-succinyltransferase of Histophilus somni (strain 129Pt) (Haemophilus somnus).